We begin with the raw amino-acid sequence, 450 residues long: Solute carrier family 52, riboflavin transporter, member 2 (450 aa).

The next 5 helical transmembrane spans lie at 14-34, 47-67, 86-106, 112-132, and 147-167; these read LLVA…WVEL, LPSY…LVTL, GLGI…APVA, VAFL…NVTF, and FFLG…GQGV. Asparagine 178 is a glycosylation site (N-linked (GlcNAc...) asparagine). A helical transmembrane segment spans residues 201 to 221; sequence FFWVLTALLGTSAAAFQGLLL. Positions 227 to 236 are enriched in low complexity; the sequence is TSEPTTGTGL. The tract at residues 227 to 264 is disordered; that stretch reads TSEPTTGTGLRVETPGTEEEEEEEEASPLQEPPGQVAG. Positions 242–252 are enriched in acidic residues; it reads GTEEEEEEEEA. 5 consecutive transmembrane segments (helical) span residues 282–302, 317–337, 344–364, 369–389, and 409–429; these read ACLL…LPAV, LAVV…MAVL, LCGL…LAAL, PLVG…LCAG, and ALLA…VAMF.

The protein belongs to the riboflavin transporter family.

The protein resides in the cell membrane. It catalyses the reaction riboflavin(in) = riboflavin(out). Its activity is regulated as follows. Riboflavin transport is Na(+)-independent but moderately pH-sensitive. Activity is strongly inhibited by riboflavin analogs, such as lumiflavin. Weakly inhibited by flavin adenine dinucleotide (FAD) and flavin mononucleotide (FMN). Plasma membrane transporter mediating the uptake by cells of the water soluble vitamin B2/riboflavin that plays a key role in biochemical oxidation-reduction reactions of the carbohydrate, lipid, and amino acid metabolism. May also act as a receptor for 4-hydroxybutyrate. The protein is Solute carrier family 52, riboflavin transporter, member 2 (Slc52a2) of Mus musculus (Mouse).